Reading from the N-terminus, the 669-residue chain is DNA ligase (669 aa).

Residues 32-36, 81-82, and glutamate 113 each bind NAD(+); these read DAEYD and SL. The active-site N6-AMP-lysine intermediate is the lysine 115. NAD(+) contacts are provided by arginine 136, glutamate 173, lysine 290, and lysine 314. Zn(2+) contacts are provided by cysteine 408, cysteine 411, cysteine 426, and cysteine 432. The region spanning 592–669 is the BRCT domain; that stretch reads AVDSALAGKI…DEQALIEFLK (78 aa).

The protein belongs to the NAD-dependent DNA ligase family. LigA subfamily. Requires Mg(2+) as cofactor. Mn(2+) is required as a cofactor.

The enzyme catalyses NAD(+) + (deoxyribonucleotide)n-3'-hydroxyl + 5'-phospho-(deoxyribonucleotide)m = (deoxyribonucleotide)n+m + AMP + beta-nicotinamide D-nucleotide.. Its function is as follows. DNA ligase that catalyzes the formation of phosphodiester linkages between 5'-phosphoryl and 3'-hydroxyl groups in double-stranded DNA using NAD as a coenzyme and as the energy source for the reaction. It is essential for DNA replication and repair of damaged DNA. The polypeptide is DNA ligase (Vibrio cholerae serotype O1 (strain ATCC 39315 / El Tor Inaba N16961)).